A 487-amino-acid polypeptide reads, in one-letter code: Glutamyl-tRNA(Gln) amidotransferase subunit A (487 aa).

Residues lysine 79 and serine 158 each act as charge relay system in the active site. The active-site Acyl-ester intermediate is the serine 182.

This sequence belongs to the amidase family. GatA subfamily. Heterotrimer of A, B and C subunits.

The enzyme catalyses L-glutamyl-tRNA(Gln) + L-glutamine + ATP + H2O = L-glutaminyl-tRNA(Gln) + L-glutamate + ADP + phosphate + H(+). Allows the formation of correctly charged Gln-tRNA(Gln) through the transamidation of misacylated Glu-tRNA(Gln) in organisms which lack glutaminyl-tRNA synthetase. The reaction takes place in the presence of glutamine and ATP through an activated gamma-phospho-Glu-tRNA(Gln). This Ehrlichia ruminantium (strain Gardel) protein is Glutamyl-tRNA(Gln) amidotransferase subunit A.